Consider the following 155-residue polypeptide: Aspartate carbamoyltransferase regulatory chain (155 aa).

4 residues coordinate Zn(2+): Cys110, Cys115, Cys139, and Cys142.

This sequence belongs to the PyrI family. As to quaternary structure, contains catalytic and regulatory chains. The cofactor is Zn(2+).

Involved in allosteric regulation of aspartate carbamoyltransferase. This Yersinia pseudotuberculosis serotype IB (strain PB1/+) protein is Aspartate carbamoyltransferase regulatory chain.